The primary structure comprises 141 residues: Hemoglobin subunit alpha-D (141 aa).

A Globin domain is found at 1 to 141 (MLTADDKKLI…VASVLAEKYR (141 aa)). The heme b site is built by histidine 58 and histidine 87.

It belongs to the globin family. Heterotetramer of two alpha-D chains and two beta chains. In terms of tissue distribution, red blood cells.

Its function is as follows. Involved in oxygen transport from the lung to the various peripheral tissues. This chain is Hemoglobin subunit alpha-D (HBAD), found in Rhea americana (Greater rhea).